The sequence spans 399 residues: Tryptophan synthase beta chain (399 aa).

Residue K92 is modified to N6-(pyridoxal phosphate)lysine.

The protein belongs to the TrpB family. Tetramer of two alpha and two beta chains. Pyridoxal 5'-phosphate serves as cofactor.

The enzyme catalyses (1S,2R)-1-C-(indol-3-yl)glycerol 3-phosphate + L-serine = D-glyceraldehyde 3-phosphate + L-tryptophan + H2O. Its pathway is amino-acid biosynthesis; L-tryptophan biosynthesis; L-tryptophan from chorismate: step 5/5. The beta subunit is responsible for the synthesis of L-tryptophan from indole and L-serine. The protein is Tryptophan synthase beta chain of Thiobacillus denitrificans (strain ATCC 25259 / T1).